A 342-amino-acid chain; its full sequence is MSALPSQFKLPDLLSTCPLKDGTNPAYKKAAAESRAWIGSYNMFADRKRAFFIQGQNELLCSHVYCYAGYEQLRTTCDFVNLLFVVDEVSDEQSGEDARATGQVFVNAMKYADWHDGSKLAKLTKDFRVRFLRLAGPKNVARFVALCESYTACVGKEAELRESGQVLGVKEFIPLRRQNSAVLLCFSLVEYILGIDLDDEVYRDENFLNAYWAACDHVCWANDVYSYDMEQSKGLSNNNIVTVLMEENHTSLQDTSDYIGEKCAEFVQIYLTSKKRLSPSLGPDAALFLESIGSWMVGNLAWSFETSRYFGSRHLEVKETGIVILRPRELPEDGSSSDSDEE.

Residues aspartate 87, asparagine 222, serine 226, and glutamate 230 each coordinate Mg(2+). The DDXXD motif motif lies at 87–91 (DEVSD). Residues arginine 308 and tyrosine 309 each coordinate (2E,6E)-farnesyl diphosphate.

The protein belongs to the terpene synthase family. Mg(2+) is required as a cofactor.

The enzyme catalyses (2E,6E)-farnesyl diphosphate = delta-cadinene + diphosphate. The catalysed reaction is (2E,6E)-farnesyl diphosphate = gamma-muurolene + diphosphate. It carries out the reaction (2E,6E)-farnesyl diphosphate = beta-copaene + diphosphate. It catalyses the reaction (2E)-geranyl diphosphate = beta-myrcene + diphosphate. Its function is as follows. Terpene cyclase that catalyzes the cyclization of farnesyl diphosphate (FPP) to various sesquiterpenes, including beta-copaene, alpha-cubebene, cadina-1(6),4-diene, gamma-muurolene, delta-cadinene, epizonarene, epicubenol and cubenol. Agr4 is also able to use the monoterpene precursor geranyl diphosphate (GPP) as substrates to synthesize the monoterpene beta-myrcene. Delta-cadinene is the major product of Agr4. This Cyclocybe aegerita (Black poplar mushroom) protein is Bifunctional terpene synthase Agr4.